The following is a 113-amino-acid chain: Photosystem II reaction center Psb28 protein (113 aa).

It belongs to the Psb28 family. In terms of assembly, part of the photosystem II complex.

It localises to the cellular thylakoid membrane. This is Photosystem II reaction center Psb28 protein from Trichodesmium erythraeum (strain IMS101).